A 316-amino-acid chain; its full sequence is 1-aminocyclopropane-1-carboxylate oxidase 4 (316 aa).

A Fe2OG dioxygenase domain is found at 153 to 253 (PNFGTKVSNY…RMSLASFYNP (101 aa)). Histidine 177, aspartate 179, and histidine 234 together coordinate Fe cation.

Belongs to the iron/ascorbate-dependent oxidoreductase family. Fe cation is required as a cofactor. As to expression, expressed in all of the floral organs examined apart from the sepals.

It catalyses the reaction 1-aminocyclopropane-1-carboxylate + L-ascorbate + O2 = ethene + L-dehydroascorbate + hydrogen cyanide + CO2 + 2 H2O. Its pathway is alkene biosynthesis; ethylene biosynthesis via S-adenosyl-L-methionine; ethylene from S-adenosyl-L-methionine: step 2/2. The sequence is that of 1-aminocyclopropane-1-carboxylate oxidase 4 (ACO4) from Solanum lycopersicum (Tomato).